The following is a 297-amino-acid chain: MALNRIVLFYGFTPIPDPDAVRLWQRALCEKLGLTGRIIISKDGINATVGGEIGAVKQYVKTTREYKGFHGIDVKWSDGGAEDFPRLSVKVRDEIVSFGAPGELTVDAGGVVGGGTHLKPEELHELVEARKQSGDEVVFFDGRNAFEAQIGRFKDAVVPDVATTHDFIKELDSGKYDALKDKPVATYCTGGIRCEVLSSLMVNRGFKEVYQLDGGIVRYGETFKDQGLWEGSLYVFDKRMHLEFSDEAKTIGECVRCKAPTSKFENCSNPSCRTLTLYCADCAASPETLRCPGGCAA.

The Rhodanese domain maps to 133–228 (SGDEVVFFDG…YGETFKDQGL (96 aa)). Residue Cys-188 is the Cysteine persulfide intermediate of the active site.

This sequence belongs to the TrhO family.

It carries out the reaction uridine(34) in tRNA + AH2 + O2 = 5-hydroxyuridine(34) in tRNA + A + H2O. In terms of biological role, catalyzes oxygen-dependent 5-hydroxyuridine (ho5U) modification at position 34 in tRNAs. This is tRNA uridine(34) hydroxylase from Pseudarthrobacter chlorophenolicus (strain ATCC 700700 / DSM 12829 / CIP 107037 / JCM 12360 / KCTC 9906 / NCIMB 13794 / A6) (Arthrobacter chlorophenolicus).